A 316-amino-acid polypeptide reads, in one-letter code: 4-hydroxy-3-methylbut-2-enyl diphosphate reductase (316 aa).

Cys-12 serves as a coordination point for [4Fe-4S] cluster. (2E)-4-hydroxy-3-methylbut-2-enyl diphosphate-binding residues include His-41 and His-74. Residues His-41 and His-74 each contribute to the dimethylallyl diphosphate site. Isopentenyl diphosphate is bound by residues His-41 and His-74. Position 96 (Cys-96) interacts with [4Fe-4S] cluster. His-124 contacts (2E)-4-hydroxy-3-methylbut-2-enyl diphosphate. A dimethylallyl diphosphate-binding site is contributed by His-124. Isopentenyl diphosphate is bound at residue His-124. The active-site Proton donor is the Glu-126. Thr-167 serves as a coordination point for (2E)-4-hydroxy-3-methylbut-2-enyl diphosphate. Residue Cys-197 participates in [4Fe-4S] cluster binding. Ser-225, Ser-226, Asn-227, and Ser-269 together coordinate (2E)-4-hydroxy-3-methylbut-2-enyl diphosphate. Dimethylallyl diphosphate contacts are provided by Ser-225, Ser-226, Asn-227, and Ser-269. Positions 225, 226, 227, and 269 each coordinate isopentenyl diphosphate.

This sequence belongs to the IspH family. In terms of assembly, homodimer. Requires [4Fe-4S] cluster as cofactor.

The catalysed reaction is isopentenyl diphosphate + 2 oxidized [2Fe-2S]-[ferredoxin] + H2O = (2E)-4-hydroxy-3-methylbut-2-enyl diphosphate + 2 reduced [2Fe-2S]-[ferredoxin] + 2 H(+). The enzyme catalyses dimethylallyl diphosphate + 2 oxidized [2Fe-2S]-[ferredoxin] + H2O = (2E)-4-hydroxy-3-methylbut-2-enyl diphosphate + 2 reduced [2Fe-2S]-[ferredoxin] + 2 H(+). Its pathway is isoprenoid biosynthesis; dimethylallyl diphosphate biosynthesis; dimethylallyl diphosphate from (2E)-4-hydroxy-3-methylbutenyl diphosphate: step 1/1. It participates in isoprenoid biosynthesis; isopentenyl diphosphate biosynthesis via DXP pathway; isopentenyl diphosphate from 1-deoxy-D-xylulose 5-phosphate: step 6/6. Functionally, catalyzes the conversion of 1-hydroxy-2-methyl-2-(E)-butenyl 4-diphosphate (HMBPP) into a mixture of isopentenyl diphosphate (IPP) and dimethylallyl diphosphate (DMAPP). Acts in the terminal step of the DOXP/MEP pathway for isoprenoid precursor biosynthesis. In Shigella flexneri serotype 5b (strain 8401), this protein is 4-hydroxy-3-methylbut-2-enyl diphosphate reductase.